The chain runs to 408 residues: Multidrug resistance protein MdtG (408 aa).

Transmembrane regions (helical) follow at residues 16 to 36 (LIVA…VMPF), 58 to 78 (IVFS…GGLA), 92 to 112 (LGMG…QFLI), 115 to 135 (ALLG…ATQV), 146 to 166 (TLST…GLLA), 173 to 193 (PVFF…LFCI), 221 to 241 (ILSL…IAPI), 256 to 276 (VAFI…LSAP), 290 to 310 (ILIT…YVQT), and 378 to 398 (AVFL…WNSL).

The protein belongs to the major facilitator superfamily. DHA1 family. MdtG (TC 2.A.1.2.20) subfamily.

The protein resides in the cell inner membrane. Its function is as follows. Confers resistance to fosfomycin and deoxycholate. This Escherichia coli (strain SMS-3-5 / SECEC) protein is Multidrug resistance protein MdtG.